Consider the following 374-residue polypeptide: Glutamate 5-kinase (374 aa).

Residue lysine 16 coordinates ATP. Residues serine 56, aspartate 143, and asparagine 155 each contribute to the substrate site. ATP-binding positions include 175–176 and 217–223; these read TD and SGGMLTK. The region spanning 282–360 is the PUA domain; sequence RGALILDDGA…SNIGAILGYK (79 aa).

Belongs to the glutamate 5-kinase family.

Its subcellular location is the cytoplasm. The enzyme catalyses L-glutamate + ATP = L-glutamyl 5-phosphate + ADP. It functions in the pathway amino-acid biosynthesis; L-proline biosynthesis; L-glutamate 5-semialdehyde from L-glutamate: step 1/2. Its function is as follows. Catalyzes the transfer of a phosphate group to glutamate to form L-glutamate 5-phosphate. The protein is Glutamate 5-kinase of Marinomonas sp. (strain MWYL1).